The primary structure comprises 515 residues: Protein DETOXIFICATION 42 (515 aa).

Topologically, residues 1–35 are cytoplasmic; it reads MMSEDGYNTDFPRNPLYIFFSDFRSVLKFDELGLE. Residues 36–56 traverse the membrane as a helical segment; the sequence is IARIALPAALALTADPIASLV. Topologically, residues 57–58 are extracellular; the sequence is DT. The chain crosses the membrane as a helical span at residues 59-79; sequence AFIGQIGPVELAAVGVSIALF. The Cytoplasmic portion of the chain corresponds to 80 to 168; the sequence is NQVSRIAIFP…AKKRNIPSAS (89 aa). A helical membrane pass occupies residues 169-189; that stretch reads SALIIGGVLGLFQAVFLISAA. Over 190–211 the chain is Extracellular; it reads KPLLSFMGVKHDSPMMRPSQRY. A helical membrane pass occupies residues 212 to 232; it reads LSLRSLGAPAVLLSLAAQGVF. Residues 233-242 are Cytoplasmic-facing; it reads RGFKDTTTPL. A helical transmembrane segment spans residues 243–263; it reads FATVIGDVTNIILDPIFIFVF. Over 264 to 266 the chain is Extracellular; sequence RLG. Residues 267-287 form a helical membrane-spanning segment; the sequence is VTGAATAHVISQYLMCGILLW. Over 288–312 the chain is Cytoplasmic; the sequence is KLMGQVDIFNMSTKHLQFCRFMKNG. A helical membrane pass occupies residues 313–333; that stretch reads FLLLMRVIAVTFCVTLSASLA. At 334–349 the chain is on the extracellular side; the sequence is AREGSTSMAAFQVCLQ. Residues 350-370 form a helical membrane-spanning segment; that stretch reads VWLATSLLADGYAVAGQAILA. At 371 to 390 the chain is on the cytoplasmic side; the sequence is SAFAKKDYKRAAATASRVLQ. Residues 391-411 traverse the membrane as a helical segment; the sequence is LGLVLGFVLAVILGAGLHFGA. The Extracellular segment spans residues 412–423; it reads RVFTKDDKVLHL. The helical transmembrane segment at 424–444 threads the bilayer; it reads ISIGLPFVAGTQPINALAFVF. Topologically, residues 445–453 are cytoplasmic; that stretch reads DGVNFGASD. Residues 454–474 form a helical membrane-spanning segment; sequence FGYAAASLVMVAIVSILCLLF. The Extracellular portion of the chain corresponds to 475–480; the sequence is LSSTHG. The helical transmembrane segment at 481 to 501 threads the bilayer; sequence FIGLWFGLTIYMSLRAAVGFW. Residues 502–515 lie on the Cytoplasmic side of the membrane; the sequence is RIGTGTGPWSFLRS.

It belongs to the multi antimicrobial extrusion (MATE) (TC 2.A.66.1) family. As to expression, expressed in roots, but not in shoots. Detected in the mature regions of the root, extending from above the root-hair region to the root-shoot junction.

It is found in the cell membrane. Functionally, citrate transporter critical for aluminum tolerance. Responsible for citrate exudation into the rhizosphere to protect roots from aluminum toxicity. In Arabidopsis thaliana (Mouse-ear cress), this protein is Protein DETOXIFICATION 42.